A 612-amino-acid chain; its full sequence is Elongation factor 4 (612 aa).

The 183-residue stretch at 11–193 folds into the tr-type G domain; the sequence is KHIRNFSIVA…RIVTDISAPT (183 aa). Residues 23–28 and 140–143 each bind GTP; these read DHGKST and NKID.

Belongs to the TRAFAC class translation factor GTPase superfamily. Classic translation factor GTPase family. LepA subfamily.

Its subcellular location is the cell membrane. It carries out the reaction GTP + H2O = GDP + phosphate + H(+). Its function is as follows. Required for accurate and efficient protein synthesis under certain stress conditions. May act as a fidelity factor of the translation reaction, by catalyzing a one-codon backward translocation of tRNAs on improperly translocated ribosomes. Back-translocation proceeds from a post-translocation (POST) complex to a pre-translocation (PRE) complex, thus giving elongation factor G a second chance to translocate the tRNAs correctly. Binds to ribosomes in a GTP-dependent manner. This Lactobacillus delbrueckii subsp. bulgaricus (strain ATCC 11842 / DSM 20081 / BCRC 10696 / JCM 1002 / NBRC 13953 / NCIMB 11778 / NCTC 12712 / WDCM 00102 / Lb 14) protein is Elongation factor 4.